The chain runs to 229 residues: Adapter protein MecA (229 aa).

It belongs to the MecA family. Homodimer.

Enables the recognition and targeting of unfolded and aggregated proteins to the ClpC protease or to other proteins involved in proteolysis. The polypeptide is Adapter protein MecA (Latilactobacillus sakei subsp. sakei (strain 23K) (Lactobacillus sakei subsp. sakei)).